A 265-amino-acid polypeptide reads, in one-letter code: tRNA pseudouridine synthase A (265 aa).

Asp-52 serves as the catalytic Nucleophile. Tyr-105 provides a ligand contact to substrate.

This sequence belongs to the tRNA pseudouridine synthase TruA family.

It carries out the reaction uridine(38/39/40) in tRNA = pseudouridine(38/39/40) in tRNA. In terms of biological role, formation of pseudouridine at positions 38, 39 and 40 in the anticodon stem and loop of transfer RNAs. In Archaeoglobus fulgidus (strain ATCC 49558 / DSM 4304 / JCM 9628 / NBRC 100126 / VC-16), this protein is tRNA pseudouridine synthase A.